Reading from the N-terminus, the 320-residue chain is MNLVRTAMLLAFMTALFMFVGFLIGGRAGMMIAFVIAAGMNFFSYWNSDRMVLSAYRAQQVDERNAPEFFAIVRDLARNAGLPMPKVYLYDSPQPNAFATGRNPENAAVAASTGLLQALSPEEVAGVMAHELAHIQNRDTLTMTITATLAGAISMLGNFAFFFGGNRENNNNPLGFVGVLVAMIVAPLAAMLVQMAISRTREYSADRRGAEICGNPLWLASALGKIARGAAHVPNEDAERNPATAHMFIINPLSGERMDNLFSTHPNTENRIAALQDMAQGGMNVSTPPVRAANPSRKSRSVPDTGLGRGGSQPPKGPWS.

2 consecutive transmembrane segments (helical) span residues 6–26 (TAMLLAFMTALFMFVGFLIGG) and 28–48 (AGMMIAFVIAAGMNFFSYWNS). A Zn(2+)-binding site is contributed by His130. The active site involves Glu131. His134 is a binding site for Zn(2+). Transmembrane regions (helical) follow at residues 145 to 165 (ITATLAGAISMLGNFAFFFGG) and 173 to 193 (PLGFVGVLVAMIVAPLAAMLV). Glu202 is a Zn(2+) binding site. The segment at 281–320 (GGMNVSTPPVRAANPSRKSRSVPDTGLGRGGSQPPKGPWS) is disordered.

Belongs to the peptidase M48B family. Requires Zn(2+) as cofactor.

The protein localises to the cell inner membrane. In Rhizobium leguminosarum bv. trifolii (strain WSM2304), this protein is Protease HtpX homolog.